The sequence spans 156 residues: Small ribosomal subunit protein uS7 (156 aa).

This sequence belongs to the universal ribosomal protein uS7 family. Part of the 30S ribosomal subunit. Contacts proteins S9 and S11.

One of the primary rRNA binding proteins, it binds directly to 16S rRNA where it nucleates assembly of the head domain of the 30S subunit. Is located at the subunit interface close to the decoding center, probably blocks exit of the E-site tRNA. This chain is Small ribosomal subunit protein uS7, found in Shewanella woodyi (strain ATCC 51908 / MS32).